Here is a 277-residue protein sequence, read N- to C-terminus: Large ribosomal subunit protein uL2c (277 aa).

Residues 30–60 form a disordered region; sequence RKKLTSGQHSGKGRNNRGIITSRHRGGGHKR. The span at 51–60 shows a compositional bias: basic residues; it reads SRHRGGGHKR.

The protein belongs to the universal ribosomal protein uL2 family. In terms of assembly, part of the 50S ribosomal subunit.

It localises to the plastid. It is found in the chloroplast. This chain is Large ribosomal subunit protein uL2c (rpl2), found in Angiopteris evecta (Mule's foot fern).